A 162-amino-acid chain; its full sequence is Corticoliberin (162 aa).

Positions Met-1–Ala-24 are cleaved as a signal peptide. The propeptide occupies Ile-25–Arg-119. The residue at position 160 (Phe-160) is a Phenylalanine amide.

This sequence belongs to the sauvagine/corticotropin-releasing factor/urotensin I family.

Its subcellular location is the secreted. Its function is as follows. This hormone from hypothalamus regulates the release of corticotropin from pituitary gland. This is Corticoliberin (crh) from Carassius auratus (Goldfish).